Here is a 179-residue protein sequence, read N- to C-terminus: Large ribosomal subunit protein uL5 (179 aa).

It belongs to the universal ribosomal protein uL5 family. In terms of assembly, part of the 50S ribosomal subunit; part of the 5S rRNA/L5/L18/L25 subcomplex. Contacts the 5S rRNA and the P site tRNA. Forms a bridge to the 30S subunit in the 70S ribosome.

Its function is as follows. This is one of the proteins that bind and probably mediate the attachment of the 5S RNA into the large ribosomal subunit, where it forms part of the central protuberance. In the 70S ribosome it contacts protein S13 of the 30S subunit (bridge B1b), connecting the 2 subunits; this bridge is implicated in subunit movement. Contacts the P site tRNA; the 5S rRNA and some of its associated proteins might help stabilize positioning of ribosome-bound tRNAs. The sequence is that of Large ribosomal subunit protein uL5 from Prochlorococcus marinus (strain MIT 9312).